A 77-amino-acid polypeptide reads, in one-letter code: Defensin-like protein (77 aa).

Positions methionine 1–alanine 30 are cleaved as a signal peptide. Disulfide bonds link cysteine 33-cysteine 77, cysteine 44-cysteine 64, cysteine 50-cysteine 71, and cysteine 54-cysteine 73.

Belongs to the DEFL family.

It localises to the secreted. The polypeptide is Defensin-like protein (Nelumbo nucifera (Sacred lotus)).